The chain runs to 174 residues: Translation initiation factor IF-3 (174 aa).

It belongs to the IF-3 family. Monomer.

The protein localises to the cytoplasm. Its function is as follows. IF-3 binds to the 30S ribosomal subunit and shifts the equilibrium between 70S ribosomes and their 50S and 30S subunits in favor of the free subunits, thus enhancing the availability of 30S subunits on which protein synthesis initiation begins. The polypeptide is Translation initiation factor IF-3 (Azorhizobium caulinodans (strain ATCC 43989 / DSM 5975 / JCM 20966 / LMG 6465 / NBRC 14845 / NCIMB 13405 / ORS 571)).